We begin with the raw amino-acid sequence, 156 residues long: Small ribosomal subunit protein uS7 (156 aa).

The protein belongs to the universal ribosomal protein uS7 family. In terms of assembly, part of the 30S ribosomal subunit. Contacts proteins S9 and S11.

In terms of biological role, one of the primary rRNA binding proteins, it binds directly to 16S rRNA where it nucleates assembly of the head domain of the 30S subunit. Is located at the subunit interface close to the decoding center, probably blocks exit of the E-site tRNA. This chain is Small ribosomal subunit protein uS7, found in Clostridium botulinum (strain Okra / Type B1).